We begin with the raw amino-acid sequence, 629 residues long: Ras GTPase-activating protein gap-1 (629 aa).

The region spanning 183-398 (DRIRPVLSSL…SVMASFLDNI (216 aa)) is the Ras-GAP domain. Residues 411 to 507 (TVFKFGNLQQ…WLNAIERQRN (97 aa)) enclose the PH domain.

Its subcellular location is the cytoplasm. Its function is as follows. GTPase-activating protein, which inhibits the vulval induction by acting as a negative regulator for the member of the Ras family let-60. Probably decreases the signaling activity of Ras by stimulating its intrinsic GTPase activity, thereby lowering the levels of GTP-bound, active Ras. This is Ras GTPase-activating protein gap-1 (gap-1) from Caenorhabditis elegans.